Here is a 187-residue protein sequence, read N- to C-terminus: Dihydrofolate reductase type A10 (187 aa).

The 173-residue stretch at 2–174 folds into the DHFR domain; sequence NISLIFANEL…YSLSIDKFVR (173 aa).

Belongs to the dihydrofolate reductase family. Homodimer.

The enzyme catalyses (6S)-5,6,7,8-tetrahydrofolate + NADP(+) = 7,8-dihydrofolate + NADPH + H(+). It participates in cofactor biosynthesis; tetrahydrofolate biosynthesis; 5,6,7,8-tetrahydrofolate from 7,8-dihydrofolate: step 1/1. Key enzyme in folate metabolism. Catalyzes an essential reaction for de novo glycine and purine synthesis, and for DNA precursor synthesis. In Escherichia coli, this protein is Dihydrofolate reductase type A10 (dfrA10).